We begin with the raw amino-acid sequence, 301 residues long: Putative F-box/LRR-repeat protein 19 (301 aa).

An F-box domain is found at 18 to 66 (PDWSELTRECLLDIFSRLSQEQRWIGPMLVSKNWMNACYDPTLNTIFDL). 5 LRR repeats span residues 108-133 (IRHCTERSLSYAAERCPNLEVLWIKN), 134-159 (CPNVTDASMEKIAMNCPNLRELDISY), 160-185 (SYGITHESLITLGRSCQNLKILKRNL), 231-256 (YSTLTARGLDSVCKGCSNLEYMDLRG), and 257-282 (CISLTRSDINTNTSGLKNLTEIIKPD).

This Arabidopsis thaliana (Mouse-ear cress) protein is Putative F-box/LRR-repeat protein 19 (FBL19).